The primary structure comprises 400 residues: Acetate kinase (400 aa).

Asn-7 contributes to the Mg(2+) binding site. An ATP-binding site is contributed by Lys-14. Residue Arg-85 participates in substrate binding. The active-site Proton donor/acceptor is Asp-142. ATP contacts are provided by residues 202–206, 278–280, and 326–330; these read HLGNG, DMR, and GIGEN. Glu-380 is a Mg(2+) binding site.

Belongs to the acetokinase family. As to quaternary structure, homodimer. It depends on Mg(2+) as a cofactor. Requires Mn(2+) as cofactor.

Its subcellular location is the cytoplasm. The catalysed reaction is acetate + ATP = acetyl phosphate + ADP. It functions in the pathway metabolic intermediate biosynthesis; acetyl-CoA biosynthesis; acetyl-CoA from acetate: step 1/2. Functionally, catalyzes the formation of acetyl phosphate from acetate and ATP. Can also catalyze the reverse reaction. The protein is Acetate kinase of Deinococcus deserti (strain DSM 17065 / CIP 109153 / LMG 22923 / VCD115).